We begin with the raw amino-acid sequence, 553 residues long: ATP synthase F(1) complex subunit alpha, mitochondrial (553 aa).

A mitochondrion-targeting transit peptide spans Met1–Leu43. Gln44 is subject to Pyrrolidone carboxylic acid. Ser53 and Ser65 each carry phosphoserine. The residue at position 76 (Ser76) is a Phosphoserine; alternate. The O-linked (GlcNAc) serine; alternate glycan is linked to Ser76. At Ser106 the chain carries Phosphoserine. N6-acetyllysine is present on residues Lys123, Lys126, and Lys132. Position 134 is a phosphothreonine (Thr134). N6-acetyllysine; alternate is present on Lys161. Lys161 is modified (N6-succinyllysine; alternate). A Phosphoserine modification is found at Ser166. Residue Lys167 is modified to N6-acetyllysine; alternate. N6-succinyllysine; alternate is present on Lys167. At Ser184 the chain carries Phosphoserine. Arg204 bears the Omega-N-methylarginine mark. ATP-binding residues include Gln215, Gly217, Lys218, Thr219, and Ser220. Thr219 contributes to the Mg(2+) binding site. 2 positions are modified to N6-acetyllysine; alternate: Lys230 and Lys239. Lys230 and Lys239 each carry N6-succinyllysine; alternate. Lys240 carries the N6-acetyllysine modification. Lys261 and Lys305 each carry N6-acetyllysine; alternate. N6-succinyllysine; alternate occurs at positions 261 and 305. Residue Asp312 participates in Mg(2+) binding. Lys427 is modified (N6-acetyllysine; alternate). Lys427 is subject to N6-succinyllysine; alternate. Lys434 bears the N6-acetyllysine mark. Positions 473 and 475 each coordinate ATP. N6-acetyllysine; alternate is present on residues Lys498, Lys506, Lys531, and Lys539. 4 positions are modified to N6-succinyllysine; alternate: Lys498, Lys506, Lys531, and Lys539. Residue Lys541 is modified to N6-acetyllysine.

This sequence belongs to the ATPase alpha/beta chains family. In terms of assembly, homotrimer. Component of the ATP synthase complex composed at least of ATP5F1A/subunit alpha, ATP5F1B/subunit beta, ATP5MC1/subunit c (homooctomer), MT-ATP6/subunit a, MT-ATP8/subunit 8, ATP5ME/subunit e, ATP5MF/subunit f, ATP5MG/subunit g, ATP5MK/subunit k, ATP5MJ/subunit j, ATP5F1C/subunit gamma, ATP5F1D/subunit delta, ATP5F1E/subunit epsilon, ATP5PF/subunit F6, ATP5PB/subunit b, ATP5PD/subunit d, ATP5PO/subunit OSCP. ATP synthase complex consists of a soluble F(1) head domain (subunits alpha(3) and beta(3)) - the catalytic core - and a membrane F(0) domain - the membrane proton channel (subunits c, a, 8, e, f, g, k and j). These two domains are linked by a central stalk (subunits gamma, delta, and epsilon) rotating inside the F1 region and a stationary peripheral stalk (subunits F6, b, d, and OSCP). Interacts with ATPAF2. Interacts with HRG; the interaction occurs on the surface of T-cells and alters the cell morphology when associated with concanavalin (in vitro). Interacts with PLG (angiostatin peptide); the interaction inhibits most of the angiogenic properties of angiostatin. Interacts with BLOC1S1. Interacts with BCL2L1 isoform BCL-X(L); the interaction mediates the association of BCL2L1 isoform BCL-X(L) with the mitochondrial membrane F(1)F(0) ATP synthase and enhances neurons metabolic efficiency. Interacts with CLN5 and PPT1. Interacts with S100A1; this interaction increases F1-ATPase activity. Interacts with ABCB7; this interaction allows the regulation of cellular iron homeostasis and cellular reactive oxygen species (ROS) levels in cardiomyocytes. In terms of processing, acetylated on lysine residues. BLOC1S1 is required for acetylation. Heart muscle (at protein level). Heart and liver.

It localises to the mitochondrion inner membrane. The protein resides in the cell membrane. Subunit alpha, of the mitochondrial membrane ATP synthase complex (F(1)F(0) ATP synthase or Complex V) that produces ATP from ADP in the presence of a proton gradient across the membrane which is generated by electron transport complexes of the respiratory chain. ATP synthase complex consist of a soluble F(1) head domain - the catalytic core - and a membrane F(1) domain - the membrane proton channel. These two domains are linked by a central stalk rotating inside the F(1) region and a stationary peripheral stalk. During catalysis, ATP synthesis in the catalytic domain of F(1) is coupled via a rotary mechanism of the central stalk subunits to proton translocation. In vivo, can only synthesize ATP although its ATP hydrolase activity can be activated artificially in vitro. With the catalytic subunit beta (ATP5F1B), forms the catalytic core in the F(1) domain. Subunit alpha does not bear the catalytic high-affinity ATP-binding sites. The sequence is that of ATP synthase F(1) complex subunit alpha, mitochondrial from Bos taurus (Bovine).